Reading from the N-terminus, the 313-residue chain is Minor outer capsid protein P9 (313 aa).

It belongs to the phytoreovirus minor outer capsid protein P9 family.

The protein resides in the virion. It is found in the host cytoplasm. In terms of biological role, minor outer capsid protein. The sequence is that of Minor outer capsid protein P9 from Catharanthus roseus (Madagascar periwinkle).